We begin with the raw amino-acid sequence, 152 residues long: Proteolipid protein 2 (152 aa).

The 119-residue stretch at 19–137 (FSRTRKGILL…DAYFTFPLRQ (119 aa)) folds into the MARVEL domain. The next 3 membrane-spanning stretches (helical) occupy residues 25-45 (GILL…FSAG), 48-68 (GYSS…VIYM), and 85-105 (FFRT…VLVE). Asparagine 108 carries an N-linked (GlcNAc...) asparagine glycan. The chain crosses the membrane as a helical span at residues 112-132 (IAAGVLGLLATCLFGYDAYFT).

It localises to the membrane. In terms of biological role, may play a role in cell differentiation in the intestinal epithelium. The protein is Proteolipid protein 2 (PLP2) of Oryctolagus cuniculus (Rabbit).